The primary structure comprises 1032 residues: MVPIFLKIFFYGFSTNKSKLSEGFQSEQSNNIIENNFHNLFHGNFNTNFLNNNNNNNNNNNNNNNNNNNNNNNNNNNNNNNNIIISSPILSASPSLSPRFQDILENNSVSINIQSSISESPPNSTDWQLEKFDDSMGMISSVISLREQQQQQQQQQQQQQQQQQQQQQQQQQQQQQQQNQQQINLQYQNLQEHCPQNQSHNQSHQQKQNNSTQIPLVQNNQQNLETFSISILDENFNNSGILSMFGEKCKKPKFPHSSIDQYQNLPSDIKMIVENISKMSNFSTQEEIVSVTFKFAFFLTNLSEKTLKILHDSISIFNKIEDLFFQIFLPQSNLIPEIYLKEYILNLFSHLCEREHFLVFNTLKLPLNFMFLCRSYFESFDRLDKIQQNQQLQIQQQNQQQNQQHYNNNNNNNNNNNNNNNNNNNNNNNNNNNNNNNNNNNNNNQQQQTHLQQQYHNYNNNFPITSINIQQQQQQLQPIDIQQLNINNSQNNQNNIQLEQPINHQNQNIYQQFQQFPNQVPSNQNLVGNDIFDTSIITIPQNNISSSQPSFLQQSPPLTHHPSSTQLVNNNLYQFDSNNQQQFQIHYTSPSFIGALASINNNNTTNNINFDNSGNTTTTTTTTTITTTTKTSNNHNSNDNVIINPNGSFLHTIPQEYRTKGSKINLSRKINKSPKGVISPKYRSILPRFGFKMKDLEERSNINGENYIRSRKGVATLINTYLTPISAEMSTKRESKCGVVICIKDHDQHSSVSIVPRLYPMSNGSKDGVEKFVFHKNVISIVCPGVFSHSYSVNRLDRNQRGFFIRYSFYMGKEEIDYVHTPIIRYKNTPSDFDQPSRVLLGHVISLHPVTQNGIVAVKFIAISNLLKKGLITKNITTSTSNLINNENNNENNNNYNGNINSNNNNNEEIEEEEENNNSSGGSSEDDDSDSKVKATRMGKPLEIILYEKNLQFHLTIPQHISKVNPEDKWRFPETLITETNDPKKSKNSSEIIHFVSSYLIEFACIIPRGNYEIIFRYENVNKTVHPIYYSI.

Disordered regions lie at residues 54-80 (NNNN…NNNN), 391-451 (QLQI…QTHL), and 884-934 (INNE…SKVK). Residues 884 to 907 (INNENNNENNNNYNGNINSNNNNN) are compositionally biased toward low complexity.

This is an uncharacterized protein from Dictyostelium discoideum (Social amoeba).